A 282-amino-acid chain; its full sequence is Probable xyloglucan endotransglucosylase/hydrolase protein 18 (282 aa).

The first 26 residues, 1 to 26 (MKLSCGTSFAFLIMFLFAAQSMHVYA), serve as a signal peptide directing secretion. The GH16 domain occupies 27 to 218 (GSFHKDVQIH…WSKAPFTAFY (192 aa)). Glutamate 104 functions as the Nucleophile in the catalytic mechanism. Catalysis depends on glutamate 108, which acts as the Proton donor. Residue glutamate 108 participates in xyloglucan binding. A glycan (N-linked (GlcNAc...) asparagine) is linked at asparagine 112. Residues 121–123 (HTN), 131–133 (DKE), 197–198 (HW), and glycine 202 contribute to the xyloglucan site. A disulfide bond links cysteine 226 and cysteine 235. A glycan (N-linked (GlcNAc...) asparagine) is linked at asparagine 238. Residues cysteine 267 and cysteine 281 are joined by a disulfide bond. Residue arginine 272 coordinates xyloglucan.

The protein belongs to the glycosyl hydrolase 16 family. XTH group 2 subfamily. In terms of processing, contains at least one intrachain disulfide bond essential for its enzymatic activity. In terms of tissue distribution, root specific.

The protein resides in the secreted. It localises to the cell wall. Its subcellular location is the extracellular space. It is found in the apoplast. The enzyme catalyses breaks a beta-(1-&gt;4) bond in the backbone of a xyloglucan and transfers the xyloglucanyl segment on to O-4 of the non-reducing terminal glucose residue of an acceptor, which can be a xyloglucan or an oligosaccharide of xyloglucan.. Its function is as follows. Catalyzes xyloglucan endohydrolysis (XEH) and/or endotransglycosylation (XET). Cleaves and religates xyloglucan polymers, an essential constituent of the primary cell wall, and thereby participates in cell wall construction of growing tissues. This is Probable xyloglucan endotransglucosylase/hydrolase protein 18 (XTH18) from Arabidopsis thaliana (Mouse-ear cress).